The sequence spans 39 residues: Potassium channel toxin alpha-KTx 2.8 (39 aa).

3 disulfides stabilise this stretch: Cys7-Cys29, Cys13-Cys34, and Cys17-Cys36.

Belongs to the short scorpion toxin superfamily. Potassium channel inhibitor family. Alpha-KTx 02 subfamily. In terms of tissue distribution, expressed by the venom gland.

Its subcellular location is the secreted. Its function is as follows. Blocks Kv1.3/KCNA3 voltage-gated potassium channels of human T-lymphocytes (Kd=0.71 nM). The polypeptide is Potassium channel toxin alpha-KTx 2.8 (Centruroides elegans (Bark scorpion)).